The primary structure comprises 421 residues: Zinc chaperone AztD (421 aa).

The signal sequence occupies residues 1 to 29 (MMENIMKKRLLSTSISTLLLGLSVMPAFA). 7 residues coordinate Zn(2+): His101, His104, Asp106, His126, His169, His216, and His405. Cys212 and Cys229 are oxidised to a cystine. A disordered region spans residues 399–421 (GGSGKVHGEHHDHEAHHHDDHAH). The span at 404–421 (VHGEHHDHEAHHHDDHAH) shows a compositional bias: basic and acidic residues. Positions 408–419 (HHDHEAHHHDDH) match the N-terminal Zn(2+)-binding motif; binds a third Zn(2+) with low affinity motif.

Monomer.

The protein resides in the periplasm. Acts as a zinc chaperone in the AztABCD zinc transport system. Directly transfers one zinc cation to the solute binding protein AztC; the transfer occurs without the formation of a stable interaction. Binds 3 Zn(2+), two with high affinity and one with low affinity, and transfers only Zn(2+) bound to site 2 to AztC. The polypeptide is Zinc chaperone AztD (Citrobacter koseri (strain ATCC BAA-895 / CDC 4225-83 / SGSC4696)).